A 693-amino-acid chain; its full sequence is Phenoloxidase subunit 2 (693 aa).

Residues 1 to 51 (MADVFESLELLFDRPNEPLITPKGENNSVFQLTEQFLTEDYANNGIELNNR) constitute a propeptide that is removed on maturation. N-linked (GlcNAc...) asparagine glycosylation is found at Asn-26 and Asn-64. Residues His-213, His-217, and His-243 each coordinate Cu cation. Glu-351 serves as the catalytic Proton acceptor. Cu cation-binding residues include His-366, His-370, and His-406. N-linked (GlcNAc...) asparagine glycans are attached at residues Asn-462 and Asn-494. 2 disulfides stabilise this stretch: Cys-583–Cys-627 and Cys-585–Cys-634. The N-linked (GlcNAc...) asparagine glycan is linked to Asn-680.

Heterodimer. Cu(2+) is required as a cofactor. The N-terminus is blocked. As to expression, synthesized by hemocytes and released into the hemolymph plasma.

It is found in the secreted. It carries out the reaction 2 L-dopa + O2 = 2 L-dopaquinone + 2 H2O. The enzyme catalyses L-tyrosine + O2 = L-dopaquinone + H2O. This is a copper-containing oxidase that functions in the formation of pigments such as melanins and other polyphenolic compounds. Catalyzes the rate-limiting conversions of tyrosine to DOPA, DOPA to DOPA-quinone and possibly 5,6 dihydroxyindole to indole-5'6 quinone. The chain is Phenoloxidase subunit 2 from Bombyx mori (Silk moth).